The sequence spans 445 residues: Phosphoglucosamine mutase (445 aa).

S102 serves as the catalytic Phosphoserine intermediate. Mg(2+) contacts are provided by S102, D241, D243, and D245. Phosphoserine is present on S102.

Belongs to the phosphohexose mutase family. Mg(2+) is required as a cofactor. Activated by phosphorylation.

The catalysed reaction is alpha-D-glucosamine 1-phosphate = D-glucosamine 6-phosphate. In terms of biological role, catalyzes the conversion of glucosamine-6-phosphate to glucosamine-1-phosphate. The sequence is that of Phosphoglucosamine mutase from Salmonella choleraesuis (strain SC-B67).